Here is a 242-residue protein sequence, read N- to C-terminus: MASRQSQKRLTKEYKAITLNPPPYVSAKPNDENILEWHYVITGPPHTPFEEGQYHGILRFPSEYPFKPPSISMITPNGRFACNTRLCLSMSDYHPDTWNPAWSVATILTGLLSFMTGDESTTGSITTSDNVKKRLARSSKEWNNAENQRFTKQFPDLVAQNKVDVAARNAREQAAATTDSTDPEKPFDVRENIDSLDPEDRARLLVEQDDHSTPSFGVQRFTLVGVVVAAFIAAYFNFFSRT.

The Cytoplasmic segment spans residues 1–220; sequence MASRQSQKRL…HSTPSFGVQR (220 aa). One can recognise a UBC core domain in the interval 5–156; that stretch reads QSQKRLTKEY…NQRFTKQFPD (152 aa). The active-site Glycyl thioester intermediate is C87. The disordered stretch occupies residues 170-190; it reads AREQAAATTDSTDPEKPFDVR. Residues 221 to 240 traverse the membrane as a helical segment; the sequence is FTLVGVVVAAFIAAYFNFFS.

Belongs to the ubiquitin-conjugating enzyme family.

It is found in the endoplasmic reticulum membrane. The enzyme catalyses S-ubiquitinyl-[E1 ubiquitin-activating enzyme]-L-cysteine + [E2 ubiquitin-conjugating enzyme]-L-cysteine = [E1 ubiquitin-activating enzyme]-L-cysteine + S-ubiquitinyl-[E2 ubiquitin-conjugating enzyme]-L-cysteine.. Its pathway is protein modification; protein ubiquitination. Its function is as follows. Catalyzes the covalent attachment of ubiquitin to other proteins. Functions in degradation of misfolded or regulated proteins localized in the endoplasmic reticulum (ER) lumen or membrane via the ubiquitin-proteasome system. Cognate E2 conjugating enzyme for the DOA10 ubiquitin ligase complex, which is part of the ERAD-C pathway responsible for the rapid degradation of membrane proteins with misfolded cytoplasmic domains. The chain is Ubiquitin-conjugating enzyme E2 6 (UBC6) from Debaryomyces hansenii (strain ATCC 36239 / CBS 767 / BCRC 21394 / JCM 1990 / NBRC 0083 / IGC 2968) (Yeast).